Reading from the N-terminus, the 140-residue chain is MPRPIRCRRVEFLPRFNYFSPREGSNDEVQLKVEELEAIRLKDLEGLMQEECAQKMQVSRQTFQLILEEARKKVADALVNGKAIRIEGGNYVFGNCKYTCLNCGKVFELDKDECPECHSSQVVCHRGKGRGHCFRHHRGW.

Belongs to the UPF0251 family.

The chain is UPF0251 protein Athe_2281 from Caldicellulosiruptor bescii (strain ATCC BAA-1888 / DSM 6725 / KCTC 15123 / Z-1320) (Anaerocellum thermophilum).